The following is a 226-amino-acid chain: Ribonuclease 3 (226 aa).

The RNase III domain maps to 6-128; that stretch reads INKLQRKLGY…LIGGVFLDSD (123 aa). Glutamate 41 provides a ligand contact to Mg(2+). Residue aspartate 45 is part of the active site. Mg(2+) contacts are provided by aspartate 114 and glutamate 117. Residue glutamate 117 is part of the active site. The DRBM domain maps to 155 to 225; it reads DPKTRLQEYL…AEQALIKLGL (71 aa).

The protein belongs to the ribonuclease III family. As to quaternary structure, homodimer. Requires Mg(2+) as cofactor.

It is found in the cytoplasm. It catalyses the reaction Endonucleolytic cleavage to 5'-phosphomonoester.. Its function is as follows. Digests double-stranded RNA. Involved in the processing of primary rRNA transcript to yield the immediate precursors to the large and small rRNAs (23S and 16S). Processes some mRNAs, and tRNAs when they are encoded in the rRNA operon. Processes pre-crRNA and tracrRNA of type II CRISPR loci if present in the organism. This Pantoea ananatis (strain LMG 20103) protein is Ribonuclease 3 (rnc).